We begin with the raw amino-acid sequence, 223 residues long: Ribonuclease T (223 aa).

Residues 20-195 (VVIDVETAGF…YDTERTAELF (176 aa)) form the Exonuclease domain. The Mg(2+) site is built by Asp23, Glu25, His182, and Asp187. Catalysis depends on His182, which acts as the Proton donor/acceptor.

It belongs to the RNase T family. Homodimer. Requires Mg(2+) as cofactor.

Its function is as follows. Trims short 3' overhangs of a variety of RNA species, leaving a one or two nucleotide 3' overhang. Responsible for the end-turnover of tRNA: specifically removes the terminal AMP residue from uncharged tRNA (tRNA-C-C-A). Also appears to be involved in tRNA biosynthesis. The protein is Ribonuclease T of Photobacterium profundum (strain SS9).